The chain runs to 837 residues: A disintegrin and metalloproteinase with thrombospondin motifs 4 (837 aa).

The N-terminal stretch at 1 to 51 (MSQTGSHPGRGLAGRWLWGAQPCLLLPIVPLSWLVWLLLLLLASLLPSARL) is a signal peptide. Positions 52–212 (ASPLPREEEI…PSPRPRRAKR (161 aa)) are excised as a propeptide. N-linked (GlcNAc...) asparagine glycosylation is present at Asn68. A Cysteine switch motif is present at residues 192-199 (PMCNVKAP). Cys194 is a binding site for Zn(2+). One can recognise a Peptidase M12B domain in the interval 218–428 (RFVETLVVAD…GYGHCLLDKP (211 aa)). Intrachain disulfides connect Cys293/Cys345, Cys322/Cys327, Cys339/Cys423, Cys377/Cys407, Cys449/Cys472, Cys460/Cys482, Cys467/Cys501, Cys495/Cys506, Cys532/Cys569, Cys536/Cys574, and Cys547/Cys559. A Zn(2+)-binding site is contributed by His361. Glu362 is an active-site residue. 2 residues coordinate Zn(2+): His365 and His371. The Disintegrin domain maps to 437–519 (TFPGKDYDAD…DQLQDFNIPQ (83 aa)). A TSP type-1 domain is found at 520–575 (AGGWGPWGPWGDCSRTCGGGVQFSSRDCTRPVPRNGGKYCEGRRTRFRSCNTEDCP). The segment at 686-837 (SKQSGSFRKF…LRRRPWAGRK (152 aa)) is spacer.

As to quaternary structure, interacts with SRPX2. Zn(2+) is required as a cofactor. In terms of processing, the precursor is cleaved by a furin endopeptidase. Glycosylated. Can be O-fucosylated by POFUT2 on a serine or a threonine residue found within the consensus sequence C1-X(2)-(S/T)-C2-G of the TSP type-1 repeat domains where C1 and C2 are the first and second cysteine residue of the repeat, respectively. Fucosylated repeats can then be further glycosylated by the addition of a beta-1,3-glucose residue by the glucosyltransferase, B3GALTL. Fucosylation mediates the efficient secretion of ADAMTS family members. Can also be C-glycosylated with one or two mannose molecules on tryptophan residues within the consensus sequence W-X-X-W of the TPRs, and N-glycosylated. These other glycosylations can also facilitate secretion. As to expression, expressed in brain, lung and heart. Expressed at very low level in placenta and skeletal muscles. Isoform 2: Detected in osteoarthritic synovium.

The protein resides in the secreted. It localises to the extracellular space. It is found in the extracellular matrix. It catalyses the reaction Glutamyl endopeptidase. Bonds cleaved include 370-Thr-Glu-Gly-Glu-|-Ala-Arg-Gly-Ser-377 in the interglobular domain of mammalian aggrecan.. Functionally, cleaves aggrecan, a cartilage proteoglycan, at the '392-Glu-|-Ala-393' site and may be involved in its turnover. Also cleaves COMP. May play an important role in the destruction of aggrecan in arthritic diseases. Could be a critical factor in the exacerbation of neurodegeneration in Alzheimer disease. This chain is A disintegrin and metalloproteinase with thrombospondin motifs 4 (ADAMTS4), found in Homo sapiens (Human).